A 480-amino-acid polypeptide reads, in one-letter code: Glycogen synthase (480 aa).

Lysine 15 contributes to the ADP-alpha-D-glucose binding site.

The protein belongs to the glycosyltransferase 1 family. Bacterial/plant glycogen synthase subfamily.

It carries out the reaction [(1-&gt;4)-alpha-D-glucosyl](n) + ADP-alpha-D-glucose = [(1-&gt;4)-alpha-D-glucosyl](n+1) + ADP + H(+). The protein operates within glycan biosynthesis; glycogen biosynthesis. Its function is as follows. Synthesizes alpha-1,4-glucan chains using ADP-glucose. This is Glycogen synthase from Rhizobium rhizogenes (strain K84 / ATCC BAA-868) (Agrobacterium radiobacter).